A 239-amino-acid polypeptide reads, in one-letter code: 2,3,4,5-tetrahydropyridine-2,6-dicarboxylate N-acetyltransferase (239 aa).

Belongs to the transferase hexapeptide repeat family. DapH subfamily.

The catalysed reaction is (S)-2,3,4,5-tetrahydrodipicolinate + acetyl-CoA + H2O = L-2-acetamido-6-oxoheptanedioate + CoA. Its pathway is amino-acid biosynthesis; L-lysine biosynthesis via DAP pathway; LL-2,6-diaminopimelate from (S)-tetrahydrodipicolinate (acetylase route): step 1/3. In terms of biological role, catalyzes the transfer of an acetyl group from acetyl-CoA to tetrahydrodipicolinate. This is 2,3,4,5-tetrahydropyridine-2,6-dicarboxylate N-acetyltransferase from Staphylococcus haemolyticus (strain JCSC1435).